Here is a 585-residue protein sequence, read N- to C-terminus: Nucleus accumbens-associated protein 2 (585 aa).

The region spanning Cys-30 to Ala-94 is the BTB domain. Glycyl lysine isopeptide (Lys-Gly) (interchain with G-Cter in SUMO2) cross-links involve residues Lys-171 and Lys-215. Residues Pro-238–Tyr-261 are compositionally biased toward polar residues. Residues Pro-238 to Asp-269 form a disordered region. Glycyl lysine isopeptide (Lys-Gly) (interchain with G-Cter in SUMO2) cross-links involve residues Lys-296, Lys-426, and Lys-453. Residues Gly-348–Arg-445 form the BEN domain. Residues Ala-541–Leu-585 are disordered. Over residues Gly-549–Ala-571 the composition is skewed to polar residues.

Homooligomer; mediated by the BTB domain. Interacts with the NuRD complex. Interacts (via C-terminal part) with HDAC2. Interacts (via BTB domain) with MTA1, MTA2 and MTA3.

It localises to the nucleus. Functionally, functions as a transcriptional repressor through its association with the NuRD complex. Recruits the NuRD complex to the promoter of MDM2, leading to the repression of MDM2 transcription and subsequent stability of p53/TP53. In Rattus norvegicus (Rat), this protein is Nucleus accumbens-associated protein 2 (Nacc2).